The chain runs to 550 residues: Thermosome subunit (550 aa).

The segment at lysine 529 to aspartate 550 is disordered. The span at glutamate 541–aspartate 550 shows a compositional bias: low complexity.

Belongs to the TCP-1 chaperonin family. Forms an oligomeric complex of eight-membered rings.

Its function is as follows. Molecular chaperone; binds unfolded polypeptides in vitro, and has a weak ATPase activity. This is Thermosome subunit (ths) from Pyrococcus abyssi (strain GE5 / Orsay).